Reading from the N-terminus, the 87-residue chain is DNA-directed RNA polymerase subunit omega (87 aa).

The protein belongs to the RNA polymerase subunit omega family. In terms of assembly, the RNAP catalytic core consists of 2 alpha, 1 beta, 1 beta' and 1 omega subunit. When a sigma factor is associated with the core the holoenzyme is formed, which can initiate transcription.

It catalyses the reaction RNA(n) + a ribonucleoside 5'-triphosphate = RNA(n+1) + diphosphate. Its function is as follows. Promotes RNA polymerase assembly. Latches the N- and C-terminal regions of the beta' subunit thereby facilitating its interaction with the beta and alpha subunits. The chain is DNA-directed RNA polymerase subunit omega from Pseudomonas syringae pv. syringae (strain B728a).